The chain runs to 89 residues: Insulin (89 aa).

Disulfide bonds link Cys-7–Cys-75, Cys-19–Cys-88, and Cys-74–Cys-79. The propeptide at 33–66 (DVGPLSAFRDLEPPLDTEMEDRFPYRQQLAGSKM) is c peptide.

It belongs to the insulin family. In terms of assembly, heterodimer of a B chain and an A chain linked by two disulfide bonds.

The protein resides in the secreted. Its function is as follows. Insulin decreases blood glucose concentration. It increases cell permeability to monosaccharides, amino acids and fatty acids. It accelerates glycolysis, the pentose phosphate cycle, and glycogen synthesis in liver. The polypeptide is Insulin (ins) (Callorhinchus milii (Ghost shark)).